We begin with the raw amino-acid sequence, 502 residues long: N-fatty-acyl-amino acid synthase/hydrolase PM20D1 (502 aa).

The signal sequence occupies residues 1–25 (MAQRCVCVLALVAMLLLVFPTVSRS). Histidine 125 is a binding site for Zn(2+). The active site involves aspartate 127. Residue aspartate 157 participates in Zn(2+) binding. Residue glutamate 191 is the Proton acceptor of the active site. 2 residues coordinate Zn(2+): glutamate 192 and aspartate 217. Asparagine 252 carries an N-linked (GlcNAc...) asparagine glycan. Histidine 464 provides a ligand contact to Zn(2+).

Belongs to the peptidase M20A family. It depends on Zn(2+) as a cofactor.

It localises to the secreted. It catalyses the reaction an N-acyl-L-amino acid + H2O = an L-alpha-amino acid + a carboxylate. The catalysed reaction is an N-acyl-aromatic L-alpha-amino acid + H2O = an aromatic L-alpha-amino acid + a carboxylate. It carries out the reaction L-phenylalanine + (9Z)-octadecenoate = N-(9Z-octadecenoyl)-L-phenylalanine + H2O. The enzyme catalyses N-(9Z-octadecenoyl)-L-leucine + H2O = L-leucine + (9Z)-octadecenoate. It catalyses the reaction N-(5Z,8Z,11Z,14Z)-eicosatetraenoyl-glycine + H2O = (5Z,8Z,11Z,14Z)-eicosatetraenoate + glycine. The catalysed reaction is N-hexadecanoyl-L-phenylalanine + H2O = hexadecanoate + L-phenylalanine. It carries out the reaction N-octadecanoyl-L-phenylalanine + H2O = octadecanoate + L-phenylalanine. The enzyme catalyses N-(4Z,7Z,10Z,13Z,16Z,19Z-docosahexaenoyl)-L-phenylalanine + H2O = (4Z,7Z,10Z,13Z,16Z,19Z)-docosahexaenoate + L-phenylalanine. It catalyses the reaction N-(9Z-octadecenoyl)-L-asparagine + H2O = L-asparagine + (9Z)-octadecenoate. The catalysed reaction is (9Z)-octadecenoate + glycine = N-(9Z-octadecenoyl)glycine + H2O. It carries out the reaction N-(9Z-octadecenoyl)-L-lysine + H2O = L-lysine + (9Z)-octadecenoate. The enzyme catalyses N-(9Z-octadecenoyl)-L-methionine + H2O = (9Z)-octadecenoate + L-methionine. It catalyses the reaction N-(9Z-octadecenoyl)-L-serine + H2O = L-serine + (9Z)-octadecenoate. The catalysed reaction is N-(9Z-octadecenoyl)-L-tryptophan + H2O = L-tryptophan + (9Z)-octadecenoate. It carries out the reaction N-(9Z-octadecenoyl)-L-tyrosine + H2O = L-tyrosine + (9Z)-octadecenoate. The enzyme catalyses N-(9Z-octadecenoyl)-L-glutamine + H2O = L-glutamine + (9Z)-octadecenoate. It catalyses the reaction N-(5Z,8Z,11Z,14Z-eicosatetraenoyl)-L-serine + H2O = (5Z,8Z,11Z,14Z)-eicosatetraenoate + L-serine. The catalysed reaction is (5Z,8Z,11Z,14Z)-eicosatetraenoate + L-phenylalanine = N-(5Z,8Z,11Z,14Z-eicosatetraenoyl)-L-phenylalanine + H2O. Its pathway is amino-acid metabolism. The protein operates within energy metabolism. It functions in the pathway lipid metabolism; fatty acid metabolism. With respect to regulation, lipoproteins are powerful coactivators of PM20D1 activity in vitro and NAA biosynthesis in vivo. Secreted enzyme that regulates the endogenous N-fatty acyl amino acid (NAAs) tissue and circulating levels by functioning as a bidirectional NAA synthase/hydrolase. It condenses free fatty acids and free amino acids to generate NAAs and bidirectionally catalyzes the reverse hydrolysis reaction. Some of these NAAs stimulate oxidative metabolism via mitochondrial uncoupling, increasing energy expenditure in a UPC1-independent manner. Thereby, this secreted protein may indirectly regulate whole body energy expenditure. PM20D1 circulates in tight association with both low- and high-density (LDL and HDL,respectively) lipoprotein particles. The polypeptide is N-fatty-acyl-amino acid synthase/hydrolase PM20D1 (Homo sapiens (Human)).